The primary structure comprises 334 residues: Leukocyte cell-derived chemotaxin 1 (334 aa).

A helical membrane pass occupies residues 46 to 66 (VVLISGAVLLLFGAIGAFYFW). Residues 105 to 201 (GSGAEEAIEV…FCGDLPIFWL (97 aa)) enclose the BRICHOS domain. Cys132 and Cys193 are joined by a disulfide. A propeptide spanning residues 211 to 214 (RERR) is cleaved from the precursor. The interval 212-268 (ERREVVRSSAPSTTRRPHSEPRGNAGPGRLSNRTRPSVQDDEEPFNPDNPYHQQEGE) is disordered. N-linked (GlcNAc...) asparagine glycosylation occurs at Asn243. 4 disulfide bridges follow: Cys282/Cys286, Cys283/Cys323, Cys293/Cys317, and Cys297/Cys313.

The protein belongs to the chondromodulin-1 family. After cleavage, the post-translationally modified ChM-I is secreted as a glycoprotein. As to expression, detected in cartilage, cardiac valves and valvular interstitial cells (at protein level). Expressed in eye.

The protein localises to the secreted. It localises to the extracellular space. It is found in the extracellular matrix. Its subcellular location is the endomembrane system. Its function is as follows. Bifunctional growth regulator that stimulates the growth of cultured chondrocytes in the presence of basic fibroblast growth factor (FGF) but inhibits the growth of cultured vascular endothelial cells. May contribute to the rapid growth of cartilage and vascular invasion prior to the replacement of cartilage by bone during endochondral bone development. Inhibits in vitro tube formation and mobilization of endothelial cells. Plays a role as antiangiogenic factor in cardiac valves to suppress neovascularization. This chain is Leukocyte cell-derived chemotaxin 1, found in Rattus norvegicus (Rat).